Reading from the N-terminus, the 242-residue chain is ATP-dependent dethiobiotin synthetase BioD 1 (242 aa).

12–17 (NVGKTT) serves as a coordination point for ATP. Thr-16 contacts Mg(2+). The active site involves Lys-37. Residue Asp-66 coordinates ATP. Positions 66 and 124 each coordinate Mg(2+). ATP contacts are provided by residues 184 to 185 (NR), 213 to 215 (PYL), and Glu-220.

It belongs to the dethiobiotin synthetase family. Homodimer. It depends on Mg(2+) as a cofactor.

It localises to the cytoplasm. The enzyme catalyses (7R,8S)-7,8-diammoniononanoate + CO2 + ATP = (4R,5S)-dethiobiotin + ADP + phosphate + 3 H(+). It participates in cofactor biosynthesis; biotin biosynthesis; biotin from 7,8-diaminononanoate: step 1/2. Its function is as follows. Catalyzes a mechanistically unusual reaction, the ATP-dependent insertion of CO2 between the N7 and N8 nitrogen atoms of 7,8-diaminopelargonic acid (DAPA, also called 7,8-diammoniononanoate) to form a ureido ring. This is ATP-dependent dethiobiotin synthetase BioD 1 from Haemophilus influenzae (strain ATCC 51907 / DSM 11121 / KW20 / Rd).